Consider the following 280-residue polypeptide: Undecaprenyl-diphosphatase (280 aa).

7 helical membrane passes run 1-21 (MTLLQALILAIVQGITEPFPV), 45-65 (FLPFLTMLHVGTLVALAGVFW), 90-110 (IFGLLVIATIPAVLVGWLLEH), 115-135 (VFGTPLAVAGFLILNGFLLMV), 151-171 (IATLAPKDAVIIGIWQCLALL), 226-246 (IMVQCVAGAVVAGLTALICSL), and 260-280 (LTPFGVYCVLAGLFAGAVILL).

It belongs to the UppP family.

It localises to the cell inner membrane. It catalyses the reaction di-trans,octa-cis-undecaprenyl diphosphate + H2O = di-trans,octa-cis-undecaprenyl phosphate + phosphate + H(+). Functionally, catalyzes the dephosphorylation of undecaprenyl diphosphate (UPP). Confers resistance to bacitracin. This is Undecaprenyl-diphosphatase from Gluconobacter oxydans (strain 621H) (Gluconobacter suboxydans).